Reading from the N-terminus, the 469-residue chain is Protein C-ets-2 (469 aa).

The PNT domain maps to 85 to 170 (ATFSGFKKEQ…EHLEQMIKEN (86 aa)). Residues Ser-220 and Ser-225 each carry the phosphoserine modification. Residues 264–289 (NLLTNNSGTPKDHDSPENGADSFESS) are disordered. A phosphoserine mark is found at Ser-295, Ser-298, and Ser-301. The segment at residues 363–443 (IQLWQFLLEL…SGKRYVYRFV (81 aa)) is a DNA-binding region (ETS).

This sequence belongs to the ETS family. In terms of processing, phosphorylation by CDK10 at Ser-220 and Ser-225 creates a phosphodegron that targets ETS2 for proteasomal degradation.

The protein localises to the nucleus. Functionally, transcription factor activating transcription. Binds specifically the DNA GGAA/T core motif (Ets-binding site or EBS) in gene promoters and stimulates transcription. This chain is Protein C-ets-2 (ETS2), found in Homo sapiens (Human).